Consider the following 553-residue polypeptide: Dihydroxy-acid dehydratase (553 aa).

Residue D78 coordinates Mg(2+). A [2Fe-2S] cluster-binding site is contributed by C119. Mg(2+) contacts are provided by D120 and K121. K121 is modified (N6-carboxylysine). C193 contacts [2Fe-2S] cluster. E441 serves as a coordination point for Mg(2+). S467 serves as the catalytic Proton acceptor.

It belongs to the IlvD/Edd family. In terms of assembly, homodimer. [2Fe-2S] cluster is required as a cofactor. It depends on Mg(2+) as a cofactor.

It carries out the reaction (2R)-2,3-dihydroxy-3-methylbutanoate = 3-methyl-2-oxobutanoate + H2O. It catalyses the reaction (2R,3R)-2,3-dihydroxy-3-methylpentanoate = (S)-3-methyl-2-oxopentanoate + H2O. It functions in the pathway amino-acid biosynthesis; L-isoleucine biosynthesis; L-isoleucine from 2-oxobutanoate: step 3/4. It participates in amino-acid biosynthesis; L-valine biosynthesis; L-valine from pyruvate: step 3/4. Functionally, functions in the biosynthesis of branched-chain amino acids. Catalyzes the dehydration of (2R,3R)-2,3-dihydroxy-3-methylpentanoate (2,3-dihydroxy-3-methylvalerate) into 2-oxo-3-methylpentanoate (2-oxo-3-methylvalerate) and of (2R)-2,3-dihydroxy-3-methylbutanoate (2,3-dihydroxyisovalerate) into 2-oxo-3-methylbutanoate (2-oxoisovalerate), the penultimate precursor to L-isoleucine and L-valine, respectively. The protein is Dihydroxy-acid dehydratase of Geobacter sp. (strain M21).